The sequence spans 426 residues: Alpha-ionylideneethane synthase abl3 (426 aa).

It belongs to the alpha-ionylideneethane synthase family.

The protein operates within hormone biosynthesis. Functionally, alpha-ionylideneethane synthase; part of the gene cluster that mediates the biosynthesis of abscisic acid (ABA), a phytohormone that acts antagonistically toward salicylic acid (SA), jasmonic acid (JA) and ethylene (ETH) signaling, to impede plant defense responses. The first step of the pathway catalyzes the reaction from farnesyl diphosphate to alpha-ionylideneethane performed by the alpha-ionylideneethane synthase abl3 via a three-step reaction mechanism involving 2 neutral intermediates, beta-farnesene and allofarnesene. The cytochrome P450 monooxygenase abl1 might then be involved in the conversion of alpha-ionylideneethane to alpha-ionylideneacetic acid. Alpha-ionylideneacetic acid is further converted to abscisic acid in 2 steps involving the cytochrome P450 monooxygenase abl2 and the short-chain dehydrogenase/reductase abl4, via the intermediates 1'-deoxy-ABA or 1',4'-trans-diol-ABA, depending on the order of action of these 2 enzymes. Abl2 is responsible for the hydroxylation of carbon atom C-1' and abl4 might be involved in the oxidation of the C-4' carbon atom. In Leptosphaeria maculans (strain JN3 / isolate v23.1.3 / race Av1-4-5-6-7-8) (Blackleg fungus), this protein is Alpha-ionylideneethane synthase abl3.